The following is a 468-amino-acid chain: Cyclin-dependent kinase 14 (468 aa).

3 positions are modified to phosphoserine: serine 24, serine 77, and serine 94. The interval lysine 103 to aspartate 132 is disordered. Serine 133 bears the Phosphoserine mark. The region spanning tyrosine 134–phenylalanine 418 is the Protein kinase domain. Residues leucine 140–valine 148 and lysine 163 each bind ATP. Catalysis depends on aspartate 255, which acts as the Proton acceptor. Residues glutamate 448–histidine 468 are disordered. Positions lysine 455–histidine 468 are enriched in polar residues.

This sequence belongs to the protein kinase superfamily. CMGC Ser/Thr protein kinase family. CDC2/CDKX subfamily. In terms of assembly, found in a complex with LRP6, CCNY and CAPRIN2 during G2/M stage; CAPRIN2 functions as a scaffold for the complex by binding to CCNY via its N terminus and to CDK14 via its C terminus. Interacts with CCNY; CCNY mediates its recruitment to the plasma membrane and promotes phosphorylation of LRP6. Interacts with CCDN3 and CDKN1A. Interacts with SEPT8. Interacts with 14-3-3 proteina YWHAB, YWHAE, YWHAH and YWHAQ.

Its subcellular location is the cell membrane. The protein localises to the cytoplasm. It localises to the nucleus. It catalyses the reaction L-seryl-[protein] + ATP = O-phospho-L-seryl-[protein] + ADP + H(+). The catalysed reaction is L-threonyl-[protein] + ATP = O-phospho-L-threonyl-[protein] + ADP + H(+). With respect to regulation, serine/threonine-protein kinase activity is promoted by associated cyclins CCDN3 and CCNY and repressed by CDKN1A. In terms of biological role, serine/threonine-protein kinase involved in the control of the eukaryotic cell cycle, whose activity is controlled by an associated cyclin. Acts as a cell-cycle regulator of Wnt signaling pathway during G2/M phase by mediating the phosphorylation of LRP6 at 'Ser-1490', leading to the activation of the Wnt signaling pathway. Acts as a regulator of cell cycle progression and cell proliferation via its interaction with CCDN3. Phosphorylates RB1 in vitro, however the relevance of such result remains to be confirmed in vivo. May also play a role in meiosis, neuron differentiation and may indirectly act as a negative regulator of insulin-responsive glucose transport. The chain is Cyclin-dependent kinase 14 (CDK14) from Dasypus novemcinctus (Nine-banded armadillo).